Here is a 74-residue protein sequence, read N- to C-terminus: Protein krueppel (74 aa).

C2H2-type zinc fingers lie at residues 1–4 (ERTH), 10–32 (FECS…MRLH), 38–60 (YHCT…LRVH), and 66–74 (YACELCASR).

Belongs to the krueppel C2H2-type zinc-finger protein family.

Its subcellular location is the nucleus. In terms of biological role, krueppel is a gap class segmentation protein. The sequence is that of Protein krueppel (Kr) from Euscelis plebejus (Leafhopper).